The primary structure comprises 268 residues: 4-diphosphocytidyl-2-C-methyl-D-erythritol kinase (268 aa).

Residue Lys-10 is part of the active site. 101 to 111 (PTQAGLGGGST) is an ATP binding site. The active site involves Asp-143.

This sequence belongs to the GHMP kinase family. IspE subfamily.

It catalyses the reaction 4-CDP-2-C-methyl-D-erythritol + ATP = 4-CDP-2-C-methyl-D-erythritol 2-phosphate + ADP + H(+). It participates in isoprenoid biosynthesis; isopentenyl diphosphate biosynthesis via DXP pathway; isopentenyl diphosphate from 1-deoxy-D-xylulose 5-phosphate: step 3/6. Catalyzes the phosphorylation of the position 2 hydroxy group of 4-diphosphocytidyl-2C-methyl-D-erythritol. This is 4-diphosphocytidyl-2-C-methyl-D-erythritol kinase from Helicobacter acinonychis (strain Sheeba).